We begin with the raw amino-acid sequence, 325 residues long: Mitochondrial amidoxime-reducing component 1 (325 aa).

The Mitochondrial matrix portion of the chain corresponds to 1–16 (MDLKEAFATIFDQNRK). The helical; Signal-anchor for type II membrane protein transmembrane segment at 17–36 (VALYAAGTTVAVLGLGLVFK) threads the bilayer. The Cytoplasmic segment spans residues 37 to 325 (YMRREEKLTR…VGEPVYKITY (289 aa)). 3 residues coordinate Mo-molybdopterin: Lys59, Ser60, and Arg84. Residues 85–175 (HWLVITEDGH…ADKPVRLVHY (91 aa)) are MOSC N-terminal region. The MOSC domain occupies 179-323 (LKPQRPHEKE…LHVGEPVYKI (145 aa)). Arg230, Arg264, Cys265, and Tyr305 together coordinate Mo-molybdopterin.

Mo-molybdopterin is required as a cofactor.

It localises to the mitochondrion outer membrane. The protein localises to the membrane. It carries out the reaction N(omega)-hydroxy-L-arginine + 2 Fe(II)-[cytochrome b5] + 2 H(+) = L-arginine + 2 Fe(III)-[cytochrome b5] + H2O. Catalyzes the reduction of N-oxygenated molecules, acting as a counterpart of cytochrome P450 and flavin-containing monooxygenases in metabolic cycles. As a component of prodrug-converting system, reduces a multitude of N-hydroxylated prodrugs particularly amidoximes, leading to increased drug bioavailability. May be involved in mitochondrial N(omega)-hydroxy-L-arginine (NOHA) reduction, regulating endogenous nitric oxide levels and biosynthesis. Postulated to cleave the N-OH bond of N-hydroxylated substrates in concert with electron transfer from NADH to cytochrome b5 reductase then to cytochrome b5, the ultimate electron donor that primes the active site for substrate reduction. The sequence is that of Mitochondrial amidoxime-reducing component 1 (mtarc1) from Danio rerio (Zebrafish).